The primary structure comprises 344 residues: MAYSVQKSRLAKVAGVSLVLLLAACSSDSRYKRQVSGDEAYLEAAPLAELHAPAGMILPVTSGDYAIPVTNGSGAVGKALDIRPPAQPLALVSGARTQFTGDTASLLVENGRGNTLWPQVVSVLQAKNYTITQRDDAGQTLTTDWVQWNRLDEDEQYRGRYQISVKPQGYQQAVTVKLLNLEQAGKPVADAASMQRYSTEMMNVISAGLDKSATDAANAAQNRASTTMDVQSAADDTGLPMLVVRGPFNVVWQRLPAALEKVGMKVTDSTRSQGNMAVTYKPLSDSDWQELGASDPGLASGDYKLQVGDLDNRSSLQFIDPKGHTLTQSQNDALVAVFQAAFSK.

A signal peptide spans 1–24 (MAYSVQKSRLAKVAGVSLVLLLAA). Cysteine 25 carries N-palmitoyl cysteine lipidation. The S-diacylglycerol cysteine moiety is linked to residue cysteine 25.

Belongs to the BamC family. Part of the Bam complex, which is composed of the outer membrane protein BamA, and four lipoproteins BamB, BamC, BamD and BamE. Forms a subcomplex with BamD and BamE. The Bam complex has the shape of a hat, with the BamA beta-barrel crown in the outer membrane and the periplasmic brim formed by the BamA POTRA domains and the 4 lipoproteins.

The protein resides in the cell outer membrane. Part of the outer membrane protein assembly complex (Bam), which is involved in assembly and insertion of beta-barrel proteins into the outer membrane. Nonessential member of the complex that stabilizes the interaction between the essential proteins BamA and BamD. Efficient substrate folding and insertion into the outer membrane requires all 5 subunits. A lateral gate may open between the first and last strands of the BamA beta-barrel that allows substrate to insert into the outer membrane; comparison of the structures of complete and nearly complete Bam complexes show there is considerable movement of all 5 proteins. The chain is Outer membrane protein assembly factor BamC from Escherichia coli (strain K12).